A 948-amino-acid chain; its full sequence is Putative helicase 009L (948 aa).

The region spanning 64–243 is the Helicase ATP-binding domain; that stretch reads LSEDTPYREL…ADVLNLILPQ (180 aa). Position 77–84 (77–84) interacts with ATP; the sequence is HAPGTGKT. The DEAH box signature appears at 187-190; it reads DEVH. The region spanning 371–554 is the Helicase C-terminal domain; the sequence is VKYDYLVRVA…AVERILMTSA (184 aa).

This chain is Putative helicase 009L, found in Frog virus 3 (isolate Goorha) (FV-3).